A 101-amino-acid polypeptide reads, in one-letter code: Small ribosomal subunit protein uS14 (101 aa).

Positions 51-70 (LPRDSSPSRQRNRCRQTGRP) are disordered.

The protein belongs to the universal ribosomal protein uS14 family. Part of the 30S ribosomal subunit. Contacts proteins S3 and S10.

Its function is as follows. Binds 16S rRNA, required for the assembly of 30S particles and may also be responsible for determining the conformation of the 16S rRNA at the A site. The sequence is that of Small ribosomal subunit protein uS14 from Salmonella arizonae (strain ATCC BAA-731 / CDC346-86 / RSK2980).